A 469-amino-acid chain; its full sequence is Cysteine--tRNA ligase (469 aa).

C29 contacts Zn(2+). The 'HIGH' region motif lies at 31–41 (PTVYNYIHIGN). C210, H235, and E239 together coordinate Zn(2+). The 'KMSKS' region motif lies at 267-271 (KMSKS). Residue K270 participates in ATP binding.

This sequence belongs to the class-I aminoacyl-tRNA synthetase family. As to quaternary structure, monomer. Zn(2+) is required as a cofactor.

The protein resides in the cytoplasm. It catalyses the reaction tRNA(Cys) + L-cysteine + ATP = L-cysteinyl-tRNA(Cys) + AMP + diphosphate. The polypeptide is Cysteine--tRNA ligase (Thermosipho melanesiensis (strain DSM 12029 / CIP 104789 / BI429)).